We begin with the raw amino-acid sequence, 151 residues long: Phosphopantetheine adenylyltransferase (151 aa).

S9 contacts substrate. Residues 9–10 (SF) and H17 each bind ATP. Positions 41, 73, and 87 each coordinate substrate. Residues 88–90 (GLR), E98, and 122–128 (TSFISSS) contribute to the ATP site.

Belongs to the bacterial CoaD family. Homohexamer. It depends on Mg(2+) as a cofactor.

It localises to the cytoplasm. The catalysed reaction is (R)-4'-phosphopantetheine + ATP + H(+) = 3'-dephospho-CoA + diphosphate. It functions in the pathway cofactor biosynthesis; coenzyme A biosynthesis; CoA from (R)-pantothenate: step 4/5. Functionally, reversibly transfers an adenylyl group from ATP to 4'-phosphopantetheine, yielding dephospho-CoA (dPCoA) and pyrophosphate. This is Phosphopantetheine adenylyltransferase from Flavobacterium psychrophilum (strain ATCC 49511 / DSM 21280 / CIP 103535 / JIP02/86).